The following is a 467-amino-acid chain: NADH-quinone oxidoreductase subunit N 2 (467 aa).

13 helical membrane passes run 1–21 (MSIF…ALFV), 31–51 (VASW…FALG), 66–86 (LSQF…GIAA), 99–119 (FMLL…VELI), 153–173 (ILFG…IIAA), 195–215 (AVIG…LFPF), 231–253 (AAYV…AAFV), 258–280 (EVTT…AALV), 287–307 (LLGF…AAGS), 315–335 (AFYS…VCAI), 357–377 (LAMI…TAGF), 394–414 (WLVI…LSMV), and 434–454 (LIFG…PAPL).

Belongs to the complex I subunit 2 family. NDH-1 is composed of 14 different subunits. Subunits NuoA, H, J, K, L, M, N constitute the membrane sector of the complex.

Its subcellular location is the cell inner membrane. It carries out the reaction a quinone + NADH + 5 H(+)(in) = a quinol + NAD(+) + 4 H(+)(out). NDH-1 shuttles electrons from NADH, via FMN and iron-sulfur (Fe-S) centers, to quinones in the respiratory chain. The immediate electron acceptor for the enzyme in this species is believed to be ubiquinone. Couples the redox reaction to proton translocation (for every two electrons transferred, four hydrogen ions are translocated across the cytoplasmic membrane), and thus conserves the redox energy in a proton gradient. The chain is NADH-quinone oxidoreductase subunit N 2 from Solidesulfovibrio magneticus (strain ATCC 700980 / DSM 13731 / RS-1) (Desulfovibrio magneticus).